A 195-amino-acid chain; its full sequence is Probable GTP-binding protein EngB (195 aa).

The region spanning 24–195 (GLSEVGLSGR…QIWNVIEKYL (172 aa)) is the EngB-type G domain. GTP is bound by residues 32-39 (GRSNVGKS), 59-63 (GKTQT), 77-80 (DVPG), 144-147 (TKED), and 176-178 (YSS). The Mg(2+) site is built by serine 39 and threonine 61.

It belongs to the TRAFAC class TrmE-Era-EngA-EngB-Septin-like GTPase superfamily. EngB GTPase family. Mg(2+) serves as cofactor.

Functionally, necessary for normal cell division and for the maintenance of normal septation. This chain is Probable GTP-binding protein EngB, found in Staphylococcus saprophyticus subsp. saprophyticus (strain ATCC 15305 / DSM 20229 / NCIMB 8711 / NCTC 7292 / S-41).